Consider the following 616-residue polypeptide: Chaperone protein HscA (616 aa).

The protein belongs to the heat shock protein 70 family.

In terms of biological role, chaperone involved in the maturation of iron-sulfur cluster-containing proteins. Has a low intrinsic ATPase activity which is markedly stimulated by HscB. Involved in the maturation of IscU. This is Chaperone protein HscA from Edwardsiella ictaluri (strain 93-146).